The sequence spans 845 residues: DNA replication licensing factor MCM7 (845 aa).

The 208-residue stretch at 410–617 (VYNRLAKSIA…DDEKLAEHVT (208 aa)) folds into the MCM domain. ATP contacts are provided by Tyr423, Gly463, Ala465, Lys466, Ser467, Asn568, Arg593, and Arg687. Positions 592–595 (SRFD) match the Arginine finger motif. Thr811 carries the phosphothreonine modification. The tract at residues 812 to 845 (DQEDSLVSTPKLAPQTTASANVSAQDSDIDLQDA) is disordered. Phosphoserine is present on Ser819. The span at 825-837 (PQTTASANVSAQD) shows a compositional bias: polar residues. Ser838 is subject to Phosphoserine.

This sequence belongs to the MCM family. As to quaternary structure, component of the MCM2-7 complex. The complex forms a toroidal hexameric ring with the proposed subunit order MCM2-MCM6-MCM4-MCM7-MCM3-MCM5; loaded onto DNA, forms a head-head double hexamer. Interacts with CSM1 and MCM10.

It is found in the cytoplasm. The protein localises to the nucleus. The catalysed reaction is ATP + H2O = ADP + phosphate + H(+). In terms of biological role, acts as a component of the MCM2-7 complex (MCM complex) which is the putative replicative helicase essential for 'once per cell cycle' DNA replication initiation and elongation in eukaryotic cells. Core component of CDC45-MCM-GINS (CMG) helicase, the molecular machine that unwinds template DNA during replication, and around which the replisome is built. The active ATPase sites in the MCM2-7 ring are formed through the interaction surfaces of two neighboring subunits such that a critical structure of a conserved arginine finger motif is provided in trans relative to the ATP-binding site of the Walker A box of the adjacent subunit. The six ATPase active sites, however, are likely to contribute differentially to the complex helicase activity. Once loaded onto DNA, double hexamers can slide on dsDNA in the absence of ATPase activity. This chain is DNA replication licensing factor MCM7 (MCM7), found in Saccharomyces cerevisiae (strain ATCC 204508 / S288c) (Baker's yeast).